We begin with the raw amino-acid sequence, 651 residues long: Translation factor GUF1 homolog, mitochondrial (651 aa).

The N-terminal 26 residues, 1-26 (MAVTRAAAPMVGNCSSAMLIIGRRYF), are a transit peptide targeting the mitochondrion. In terms of domain architecture, tr-type G spans 51 to 228 (KKIRNFGIVA…AVVERLPPPK (178 aa)). GTP-binding positions include 60 to 67 (AHVDHGKS), 121 to 125 (DTPGH), and 175 to 178 (NKVD).

Belongs to the TRAFAC class translation factor GTPase superfamily. Classic translation factor GTPase family. LepA subfamily.

It is found in the mitochondrion inner membrane. The enzyme catalyses GTP + H2O = GDP + phosphate + H(+). Promotes mitochondrial protein synthesis. May act as a fidelity factor of the translation reaction, by catalyzing a one-codon backward translocation of tRNAs on improperly translocated ribosomes. Binds to mitochondrial ribosomes in a GTP-dependent manner. The polypeptide is Translation factor GUF1 homolog, mitochondrial (Brugia malayi (Filarial nematode worm)).